Consider the following 323-residue polypeptide: D-specific alpha-keto acid dehydrogenase (323 aa).

NAD(+) contacts are provided by residues 157–158, 230–232, and Asp-256; these read HI and TGR. The active site involves Arg-232. Residue Glu-261 is part of the active site. Residue His-293 is the Proton donor of the active site. NAD(+) is bound at residue 293–296; it reads HTAY.

It belongs to the D-isomer specific 2-hydroxyacid dehydrogenase family.

Its function is as follows. Required for high-level resistance to glycopeptides antibiotics. Catalyzes the reduction of 2-keto acids to 2-D-hydroxy acids that give rise to peptidoglycan precursors that terminate in the depsipeptide D-alanine-2-lactate rather than the dipeptide D-alanine-D-alanine thus preventing vancomycin binding. This is D-specific alpha-keto acid dehydrogenase (vanHB) from Enterococcus faecalis (strain ATCC 700802 / V583).